Consider the following 38-residue polypeptide: Large ribosomal subunit protein bL12 (38 aa).

This sequence belongs to the bacterial ribosomal protein bL12 family. Homodimer. Part of the ribosomal stalk of the 50S ribosomal subunit. Forms a multimeric L10(L12)X complex, where L10 forms an elongated spine to which 2 to 4 L12 dimers bind in a sequential fashion. Binds GTP-bound translation factors.

In terms of biological role, forms part of the ribosomal stalk which helps the ribosome interact with GTP-bound translation factors. Is thus essential for accurate translation. The sequence is that of Large ribosomal subunit protein bL12 (rplL) from Salinivibrio costicola (Vibrio costicola).